A 385-amino-acid polypeptide reads, in one-letter code: Succinate--CoA ligase [ADP-forming] subunit beta (385 aa).

One can recognise an ATP-grasp domain in the interval 9-240 (KEIFAKYGIP…ETQLPQLEVE (232 aa)). Residues K46, 53–55 (GRG), E98, T101, and E106 contribute to the ATP site. Residues N195 and D209 each coordinate Mg(2+). Residues N260 and 317–319 (GIL) each bind substrate.

This sequence belongs to the succinate/malate CoA ligase beta subunit family. As to quaternary structure, heterotetramer of two alpha and two beta subunits. Requires Mg(2+) as cofactor.

It carries out the reaction succinate + ATP + CoA = succinyl-CoA + ADP + phosphate. It catalyses the reaction GTP + succinate + CoA = succinyl-CoA + GDP + phosphate. It participates in carbohydrate metabolism; tricarboxylic acid cycle; succinate from succinyl-CoA (ligase route): step 1/1. Succinyl-CoA synthetase functions in the citric acid cycle (TCA), coupling the hydrolysis of succinyl-CoA to the synthesis of either ATP or GTP and thus represents the only step of substrate-level phosphorylation in the TCA. The beta subunit provides nucleotide specificity of the enzyme and binds the substrate succinate, while the binding sites for coenzyme A and phosphate are found in the alpha subunit. The chain is Succinate--CoA ligase [ADP-forming] subunit beta from Aquifex aeolicus (strain VF5).